A 484-amino-acid polypeptide reads, in one-letter code: Acetyl-coenzyme A carboxylase carboxyl transferase subunit beta, chloroplastic (484 aa).

Residues 223–484 (LWIQCDNCYG…LHAFFPLNKN (262 aa)) enclose the CoA carboxyltransferase N-terminal domain. Residues cysteine 227, cysteine 230, cysteine 243, and cysteine 246 each contribute to the Zn(2+) site. The segment at 227 to 246 (CDNCYGLMYKKVKMNVCEQC) adopts a C4-type zinc-finger fold.

The protein belongs to the AccD/PCCB family. In terms of assembly, acetyl-CoA carboxylase is a heterohexamer composed of biotin carboxyl carrier protein, biotin carboxylase and 2 subunits each of ACCase subunit alpha and ACCase plastid-coded subunit beta (accD). Requires Zn(2+) as cofactor.

Its subcellular location is the plastid. The protein resides in the chloroplast stroma. It carries out the reaction N(6)-carboxybiotinyl-L-lysyl-[protein] + acetyl-CoA = N(6)-biotinyl-L-lysyl-[protein] + malonyl-CoA. It participates in lipid metabolism; malonyl-CoA biosynthesis; malonyl-CoA from acetyl-CoA: step 1/1. Its function is as follows. Component of the acetyl coenzyme A carboxylase (ACC) complex. Biotin carboxylase (BC) catalyzes the carboxylation of biotin on its carrier protein (BCCP) and then the CO(2) group is transferred by the transcarboxylase to acetyl-CoA to form malonyl-CoA. The sequence is that of Acetyl-coenzyme A carboxylase carboxyl transferase subunit beta, chloroplastic from Crucihimalaya wallichii (Rock-cress).